The sequence spans 285 residues: 4-diphosphocytidyl-2-C-methyl-D-erythritol kinase (285 aa).

K14 is an active-site residue. 97-107 (PMGGGIGGGSS) provides a ligand contact to ATP. D139 is an active-site residue.

This sequence belongs to the GHMP kinase family. IspE subfamily.

It catalyses the reaction 4-CDP-2-C-methyl-D-erythritol + ATP = 4-CDP-2-C-methyl-D-erythritol 2-phosphate + ADP + H(+). Its pathway is isoprenoid biosynthesis; isopentenyl diphosphate biosynthesis via DXP pathway; isopentenyl diphosphate from 1-deoxy-D-xylulose 5-phosphate: step 3/6. Catalyzes the phosphorylation of the position 2 hydroxy group of 4-diphosphocytidyl-2C-methyl-D-erythritol. In Tolumonas auensis (strain DSM 9187 / NBRC 110442 / TA 4), this protein is 4-diphosphocytidyl-2-C-methyl-D-erythritol kinase.